We begin with the raw amino-acid sequence, 427 residues long: Enolase 1 (427 aa).

Gln162 is a (2R)-2-phosphoglycerate binding site. Residue Glu204 is the Proton donor of the active site. Mg(2+)-binding residues include Asp241, Glu285, and Asp312. Positions 337, 366, 367, and 388 each coordinate (2R)-2-phosphoglycerate. Residue Lys337 is the Proton acceptor of the active site.

It belongs to the enolase family. Mg(2+) serves as cofactor.

The protein localises to the cytoplasm. The protein resides in the secreted. It is found in the cell surface. It catalyses the reaction (2R)-2-phosphoglycerate = phosphoenolpyruvate + H2O. It participates in carbohydrate degradation; glycolysis; pyruvate from D-glyceraldehyde 3-phosphate: step 4/5. In terms of biological role, catalyzes the reversible conversion of 2-phosphoglycerate (2-PG) into phosphoenolpyruvate (PEP). It is essential for the degradation of carbohydrates via glycolysis. The protein is Enolase 1 of Chlorobaculum tepidum (strain ATCC 49652 / DSM 12025 / NBRC 103806 / TLS) (Chlorobium tepidum).